The following is a 411-amino-acid chain: Prostaglandin E2 receptor EP3 subtype (411 aa).

The Extracellular segment spans residues 1–49 (MKETRGDGGSAPFCTRLNHSYPGMWAPEARGNLTRPPGPGEDCGSVSVA). N-linked (GlcNAc...) asparagine glycosylation is found at N18 and N32. A helical membrane pass occupies residues 50-74 (FPITMLITGFVGNALAMLLVSRSYR). At 75–87 (RRESKRKKSFLLC) the chain is on the cytoplasmic side. The chain crosses the membrane as a helical span at residues 88-108 (IGWLALTDLVGQLLTSPVVIL). Topologically, residues 109 to 127 (VYLSKQRWEQLDPSGRLCT) are extracellular. Cysteines 126 and 204 form a disulfide. Residues 128 to 149 (FFGLTMTVFGLSSLFIASAMAV) form a helical membrane-spanning segment. Over 150 to 171 (ERALAIRAPHWYASHMKTRATR) the chain is Cytoplasmic. Residues 172–193 (AVLLGVWLAVLAFALLPVLGVG) traverse the membrane as a helical segment. Topologically, residues 194-223 (QYTIQWPGTWCFISTGRGDNGTSSSHNWGN) are extracellular. N213 is a glycosylation site (N-linked (GlcNAc...) asparagine). The chain crosses the membrane as a helical span at residues 224–249 (LFFASTFAFLGLLALAITFTCNLATI). Topologically, residues 250-279 (KALVSRCRAKAAASQSSAQWGRITTETAIQ) are cytoplasmic. The chain crosses the membrane as a helical span at residues 280–303 (LMGIMCVLSVCWSPLLIMMLKMIF). Residues 304-323 (NQTSVEHCKTDTGKQKECNF) are Extracellular-facing. A helical transmembrane segment spans residues 324-345 (FLIAVRLASLNQILDPWVYLLL). The Cytoplasmic segment spans residues 346–411 (RKILLRKFCQ…ADPGARPYQQ (66 aa)). Residues 367-390 (IQRENRNVSHSGQHEEARDSEKSK) are compositionally biased toward basic and acidic residues. Residues 367–392 (IQRENRNVSHSGQHEEARDSEKSKTI) are disordered.

Belongs to the G-protein coupled receptor 1 family. In terms of assembly, interacts (via C-terminus) with MKLN1. In terms of tissue distribution, in the kidney cortex and medulla, adrenal gland and stomach. In kidney, expression is higher in tubules in the outer medulla, with lower levels in cortex. In kidney cortex, expression is restricted to distal tubules.

It is found in the cell membrane. Functionally, receptor for prostaglandin E2 (PGE2). Required for normal development of fever in response to pyrinogens, including IL1B, prostaglandin E2 and bacterial lipopolysaccharide (LPS). Required for normal potentiation of platelet aggregation by prostaglandin E2, and thus plays a role in the regulation of blood coagulation. Required for increased HCO3(-) secretion in the duodenum in response to mucosal acidification, and thereby contributes to the protection of the mucosa against acid-induced ulceration. Not required for normal kidney function, normal urine volume and osmolality. The polypeptide is Prostaglandin E2 receptor EP3 subtype (PTGER3) (Oryctolagus cuniculus (Rabbit)).